The following is a 173-amino-acid chain: Rubredoxin-2 (173 aa).

Rubredoxin-like domains follow at residues 2-53 (ASYK…FMLI) and 119-170 (YLKW…YVLY). Fe cation contacts are provided by cysteine 6, cysteine 9, cysteine 39, cysteine 42, cysteine 124, cysteine 127, cysteine 157, and cysteine 160.

Belongs to the rubredoxin family. Fe(3+) serves as cofactor.

The protein resides in the cytoplasm. It participates in hydrocarbon metabolism; alkane degradation. Functionally, involved in the hydrocarbon hydroxylating system, which transfers electrons from NADH to rubredoxin reductase and then through rubredoxin to alkane 1 monooxygenase. This is Rubredoxin-2 (alkG) from Ectopseudomonas oleovorans (Pseudomonas oleovorans).